We begin with the raw amino-acid sequence, 160 residues long: MLSPKRTKFRKQHRGRMRGVASKGNTIAFGQFALQAQDCGWVTARQIEASRRAMTRYIKRGGQIWIRIFPDKPVTMRPAETRMGSGKGNPEFWVAVVKPGRILFEMGGDDITEEIAKEAMRLAQYKLPVKTKFISSDKNLEVSSQENTKNNKESQEEVKQ.

The span at 138–148 (KNLEVSSQENT) shows a compositional bias: polar residues. Positions 138 to 160 (KNLEVSSQENTKNNKESQEEVKQ) are disordered. Residues 149–160 (KNNKESQEEVKQ) show a composition bias toward basic and acidic residues.

It belongs to the universal ribosomal protein uL16 family. As to quaternary structure, part of the 50S ribosomal subunit.

In terms of biological role, binds 23S rRNA and is also seen to make contacts with the A and possibly P site tRNAs. In Prochlorococcus marinus (strain MIT 9312), this protein is Large ribosomal subunit protein uL16.